The sequence spans 374 residues: Eukaryotic translation initiation factor 3 subunit M (374 aa).

One can recognise a PCI domain in the interval 180–339; that stretch reads EAAKVMVELL…KKVVVSHSTH (160 aa).

It belongs to the eIF-3 subunit M family. Component of the eukaryotic translation initiation factor 3 (eIF-3) complex, which is composed of 13 subunits: eif3a, eif3b, eif3c, eif3d, eif3e, eif3f, eif3g, eif3h, eif3i, eif3j, eif3k, eif3l and eif3m.

It is found in the cytoplasm. Functionally, component of the eukaryotic translation initiation factor 3 (eIF-3) complex, which is involved in protein synthesis of a specialized repertoire of mRNAs and, together with other initiation factors, stimulates binding of mRNA and methionyl-tRNAi to the 40S ribosome. The eIF-3 complex specifically targets and initiates translation of a subset of mRNAs involved in cell proliferation. The polypeptide is Eukaryotic translation initiation factor 3 subunit M (eif3m) (Xenopus laevis (African clawed frog)).